Here is a 278-residue protein sequence, read N- to C-terminus: 3-methyl-2-oxobutanoate hydroxymethyltransferase (278 aa).

Residues Asp-44 and Asp-83 each contribute to the Mg(2+) site. 3-methyl-2-oxobutanoate is bound by residues 44-45 (DS), Asp-83, and Lys-112. Glu-114 is a binding site for Mg(2+). The active-site Proton acceptor is the Glu-181.

This sequence belongs to the PanB family. In terms of assembly, homodecamer; pentamer of dimers. It depends on Mg(2+) as a cofactor.

Its subcellular location is the cytoplasm. It catalyses the reaction 3-methyl-2-oxobutanoate + (6R)-5,10-methylene-5,6,7,8-tetrahydrofolate + H2O = 2-dehydropantoate + (6S)-5,6,7,8-tetrahydrofolate. Its pathway is cofactor biosynthesis; (R)-pantothenate biosynthesis; (R)-pantoate from 3-methyl-2-oxobutanoate: step 1/2. In terms of biological role, catalyzes the reversible reaction in which hydroxymethyl group from 5,10-methylenetetrahydrofolate is transferred onto alpha-ketoisovalerate to form ketopantoate. This is 3-methyl-2-oxobutanoate hydroxymethyltransferase from Roseiflexus sp. (strain RS-1).